Consider the following 297-residue polypeptide: Juvenile hormone acid O-methyltransferase (297 aa).

The protein belongs to the methyltransferase superfamily. As to expression, predominantly expressed in corpora allata. Also expressed at low level in testis.

The catalysed reaction is (2E,6E)-farnesoate + S-adenosyl-L-methionine = methyl (2E,6E)-farnesoate + S-adenosyl-L-homocysteine. It catalyses the reaction juvenile hormone III carboxylate + S-adenosyl-L-methionine = juvenile hormone III + S-adenosyl-L-homocysteine. Functionally, O-methyltransferase that transfers a methyl group from S-adenosyl-L-methionine (SAM) to the carboxyl group of juvenile hormone acids to produce active juvenile hormones in the corpora allata, the last step during juvenile hormone biosynthesis. Also able to methylate farnesoate to methyl farnesoate. This chain is Juvenile hormone acid O-methyltransferase, found in Drosophila melanogaster (Fruit fly).